The chain runs to 165 residues: Putative 4-hydroxy-4-methyl-2-oxoglutarate aldolase (165 aa).

Substrate contacts are provided by residues 80–83 (GGNL) and Arg-102. Asp-103 lines the a divalent metal cation pocket.

Belongs to the class II aldolase/RraA-like family. As to quaternary structure, homotrimer. Requires a divalent metal cation as cofactor.

The catalysed reaction is 4-hydroxy-4-methyl-2-oxoglutarate = 2 pyruvate. The enzyme catalyses oxaloacetate + H(+) = pyruvate + CO2. Its function is as follows. Catalyzes the aldol cleavage of 4-hydroxy-4-methyl-2-oxoglutarate (HMG) into 2 molecules of pyruvate. Also contains a secondary oxaloacetate (OAA) decarboxylase activity due to the common pyruvate enolate transition state formed following C-C bond cleavage in the retro-aldol and decarboxylation reactions. The protein is Putative 4-hydroxy-4-methyl-2-oxoglutarate aldolase of Cupriavidus taiwanensis (strain DSM 17343 / BCRC 17206 / CCUG 44338 / CIP 107171 / LMG 19424 / R1) (Ralstonia taiwanensis (strain LMG 19424)).